Reading from the N-terminus, the 139-residue chain is Putative nickel-responsive regulator (139 aa).

Ni(2+) is bound by residues H79, H90, H92, and C98.

The protein belongs to the transcriptional regulatory CopG/NikR family. The cofactor is Ni(2+).

Transcriptional regulator. This chain is Putative nickel-responsive regulator, found in Anaeromyxobacter sp. (strain K).